Reading from the N-terminus, the 400-residue chain is Argininosuccinate synthase (400 aa).

Residues 11–19 (AYSGGLDTS) and Ala38 each bind ATP. L-citrulline is bound by residues Tyr89 and Ser94. Residue Gly119 participates in ATP binding. Positions 121, 125, and 126 each coordinate L-aspartate. Asn125 contacts L-citrulline. Positions 129, 178, 187, 263, and 275 each coordinate L-citrulline.

Belongs to the argininosuccinate synthase family. Type 1 subfamily. In terms of assembly, homotetramer.

It localises to the cytoplasm. The catalysed reaction is L-citrulline + L-aspartate + ATP = 2-(N(omega)-L-arginino)succinate + AMP + diphosphate + H(+). It functions in the pathway amino-acid biosynthesis; L-arginine biosynthesis; L-arginine from L-ornithine and carbamoyl phosphate: step 2/3. The protein is Argininosuccinate synthase of Desulfatibacillum aliphaticivorans.